The chain runs to 489 residues: Calcium uptake protein 1, mitochondrial (489 aa).

Residues Met-1–Leu-34 constitute a mitochondrion transit peptide. The disordered stretch occupies residues Ser-62–Gln-109. Over residues Val-64–Ala-80 the composition is skewed to basic and acidic residues. Residues Glu-81–Gly-101 are compositionally biased toward acidic residues. The tract at residues Lys-106–Lys-117 is polybasic region. Residues Lys-133–Arg-136 are k/R-ring. The 36-residue stretch at Thr-229–Gln-264 folds into the EF-hand 1 domain. The Ca(2+) site is built by Asp-242, Asn-244, Asp-246, Glu-248, and Glu-253. The tract at residues Arg-270 to Arg-274 is k/R-ring. 2 consecutive EF-hand domains span residues Ile-371–Val-386 and Leu-420–Arg-455. 5 residues coordinate Ca(2+): Asp-433, Asp-435, Asn-437, Glu-439, and Glu-444. The interval Arg-467 to Gln-477 is C-helix region.

Belongs to the MICU1 family. MICU1 subfamily. Heterodimer; disulfide-linked; heterodimerizes with micu2. Component of the uniplex complex.

Its subcellular location is the mitochondrion intermembrane space. The protein localises to the mitochondrion inner membrane. In terms of biological role, calcium sensor of the mitochondrial calcium uniporter (mcu) channel, which senses calcium level via its EF-hand domains. micu1 and micu2 form a disulfide-linked heterodimer that stimulates and inhibits MCU activity, depending on the concentration of calcium. At low calcium levels, micu1 occludes the pore of the MCU channel, preventing mitochondrial calcium uptake. At higher calcium levels, calcium-binding to micu1 and micu2 induces a conformational change that weakens mcu-micu1 interactions and moves the micu1-micu2 heterodimer away from the pore, allowing calcium permeation through the mcu channel. Also required to protect against manganese toxicity by preventing manganese uptake by mcu. This chain is Calcium uptake protein 1, mitochondrial (micu1), found in Danio rerio (Zebrafish).